The sequence spans 236 residues: uncharacterized protein (236 aa).

The HTH gntR-type domain occupies 1–69 (MLKYQQIATE…RGSGIFVRKH (69 aa)). The H-T-H motif DNA-binding region spans 29 to 48 (LETLMAQFEVSKSTITKSLE).

This is an uncharacterized protein from Bacillus subtilis (strain 168).